The following is a 453-amino-acid chain: Bifunctional protein GlmU (453 aa).

Positions 1-227 are pyrophosphorylase; the sequence is MNKLSVVILA…LMEVEGVNNR (227 aa). Residues 9 to 12, K23, Q74, 79 to 80, 101 to 103, G138, E152, N167, and N225 each bind UDP-N-acetyl-alpha-D-glucosamine; these read LAAG, GT, and YGD. Residue D103 participates in Mg(2+) binding. N225 serves as a coordination point for Mg(2+). Positions 228 to 248 are linker; sequence LQLANLERHFQRKQVEKLLLA. The interval 249 to 453 is N-acetyltransferase; it reads GVTFADPARF…ISNWQRPKRK (205 aa). UDP-N-acetyl-alpha-D-glucosamine-binding residues include R331 and K349. The Proton acceptor role is filled by H361. Residues Y364 and N375 each contribute to the UDP-N-acetyl-alpha-D-glucosamine site. Acetyl-CoA contacts are provided by residues A378, 384 to 385, S403, A421, and R438; that span reads NY.

In the N-terminal section; belongs to the N-acetylglucosamine-1-phosphate uridyltransferase family. This sequence in the C-terminal section; belongs to the transferase hexapeptide repeat family. Homotrimer. Mg(2+) serves as cofactor.

The protein resides in the cytoplasm. It catalyses the reaction alpha-D-glucosamine 1-phosphate + acetyl-CoA = N-acetyl-alpha-D-glucosamine 1-phosphate + CoA + H(+). It carries out the reaction N-acetyl-alpha-D-glucosamine 1-phosphate + UTP + H(+) = UDP-N-acetyl-alpha-D-glucosamine + diphosphate. Its pathway is nucleotide-sugar biosynthesis; UDP-N-acetyl-alpha-D-glucosamine biosynthesis; N-acetyl-alpha-D-glucosamine 1-phosphate from alpha-D-glucosamine 6-phosphate (route II): step 2/2. The protein operates within nucleotide-sugar biosynthesis; UDP-N-acetyl-alpha-D-glucosamine biosynthesis; UDP-N-acetyl-alpha-D-glucosamine from N-acetyl-alpha-D-glucosamine 1-phosphate: step 1/1. It participates in bacterial outer membrane biogenesis; LPS lipid A biosynthesis. Its function is as follows. Catalyzes the last two sequential reactions in the de novo biosynthetic pathway for UDP-N-acetylglucosamine (UDP-GlcNAc). The C-terminal domain catalyzes the transfer of acetyl group from acetyl coenzyme A to glucosamine-1-phosphate (GlcN-1-P) to produce N-acetylglucosamine-1-phosphate (GlcNAc-1-P), which is converted into UDP-GlcNAc by the transfer of uridine 5-monophosphate (from uridine 5-triphosphate), a reaction catalyzed by the N-terminal domain. This Histophilus somni (strain 129Pt) (Haemophilus somnus) protein is Bifunctional protein GlmU.